We begin with the raw amino-acid sequence, 161 residues long: Lipoprotein signal peptidase (161 aa).

The next 3 membrane-spanning stretches (helical) occupy residues 4–24 (LLVV…WSKY), 61–81 (KMIF…YLLI), and 87–107 (SIWY…NFID). Residues aspartate 116 and aspartate 132 contribute to the active site. The chain crosses the membrane as a helical span at residues 127 to 147 (IFNVADSTLVVGVICIFIYLI).

This sequence belongs to the peptidase A8 family.

Its subcellular location is the cell membrane. It carries out the reaction Release of signal peptides from bacterial membrane prolipoproteins. Hydrolyzes -Xaa-Yaa-Zaa-|-(S,diacylglyceryl)Cys-, in which Xaa is hydrophobic (preferably Leu), and Yaa (Ala or Ser) and Zaa (Gly or Ala) have small, neutral side chains.. It functions in the pathway protein modification; lipoprotein biosynthesis (signal peptide cleavage). This protein specifically catalyzes the removal of signal peptides from prolipoproteins. This chain is Lipoprotein signal peptidase, found in Enterococcus faecalis (strain ATCC 700802 / V583).